The chain runs to 156 residues: Small ribosomal subunit protein uS7 (156 aa).

This sequence belongs to the universal ribosomal protein uS7 family. In terms of assembly, part of the 30S ribosomal subunit. Contacts proteins S9 and S11.

Functionally, one of the primary rRNA binding proteins, it binds directly to 16S rRNA where it nucleates assembly of the head domain of the 30S subunit. Is located at the subunit interface close to the decoding center, probably blocks exit of the E-site tRNA. This Magnetococcus marinus (strain ATCC BAA-1437 / JCM 17883 / MC-1) protein is Small ribosomal subunit protein uS7.